The primary structure comprises 201 residues: Recombination protein RecR (201 aa).

The C4-type zinc finger occupies 59–74 (CEICGNMDTENMCRIC). One can recognise a Toprim domain in the interval 82-177 (SIIAIVETVA…KISRLASGIP (96 aa)).

This sequence belongs to the RecR family.

Functionally, may play a role in DNA repair. It seems to be involved in an RecBC-independent recombinational process of DNA repair. It may act with RecF and RecO. This chain is Recombination protein RecR, found in Rickettsia conorii (strain ATCC VR-613 / Malish 7).